Reading from the N-terminus, the 111-residue chain is Distal membrane-arm assembly complex protein 1 (111 aa).

The segment covering 1-11 (MGSSFSGSTEF) has biased composition (polar residues). The interval 1 to 40 (MGSSFSGSTEFSAPAPPTVSTAVPANPPAKSAVPASPARD) is disordered. Over residues 18–38 (TVSTAVPANPPAKSAVPASPA) the composition is skewed to low complexity. 2 helical membrane-spanning segments follow: residues 51–68 (VLSG…YLVA) and 81–101 (GTVL…VVLV).

As to quaternary structure, interacts with incompletely assembled mitochondrial NADH:ubiquinone oxidoreductase complex (complex I).

The protein resides in the mitochondrion inner membrane. Its function is as follows. Required for the assembly of the mitochondrial NADH:ubiquinone oxidoreductase complex (complex I). Involved in the assembly of the distal region of complex I. The protein is Distal membrane-arm assembly complex protein 1 of Mus musculus (Mouse).